A 96-amino-acid chain; its full sequence is Growth-regulated alpha protein (96 aa).

The N-terminal stretch at Met-1–Gly-24 is a signal peptide. Disulfide bonds link Cys-33–Cys-59 and Cys-35–Cys-75.

Belongs to the intercrine alpha (chemokine CxC) family. In terms of processing, the N-terminal processed form KC(5-72) is produced by proteolytic cleavage after secretion from bone marrow stromal cells.

The protein localises to the secreted. Its function is as follows. Has chemotactic activity for neutrophils. Contributes to neutrophil activation during inflammation. Hematoregulatory chemokine, which, in vitro, suppresses hematopoietic progenitor cell proliferation. KC(5-72) shows a highly enhanced hematopoietic activity. This Mus musculus (Mouse) protein is Growth-regulated alpha protein (Cxcl1).